We begin with the raw amino-acid sequence, 72 residues long: MSNDDSIEFEGSVSETLPNTTFRVKLENGYEIIAHISGRMRKNYIRILTGDRVKVEMTPYDLTKGRITYRMK.

Residues 1–72 (MSNDDSIEFE…TKGRITYRMK (72 aa)) form the S1-like domain.

The protein belongs to the IF-1 family. Component of the 30S ribosomal translation pre-initiation complex which assembles on the 30S ribosome in the order IF-2 and IF-3, IF-1 and N-formylmethionyl-tRNA(fMet); mRNA recruitment can occur at any time during PIC assembly.

Its subcellular location is the cytoplasm. Its function is as follows. One of the essential components for the initiation of protein synthesis. Stabilizes the binding of IF-2 and IF-3 on the 30S subunit to which N-formylmethionyl-tRNA(fMet) subsequently binds. Helps modulate mRNA selection, yielding the 30S pre-initiation complex (PIC). Upon addition of the 50S ribosomal subunit IF-1, IF-2 and IF-3 are released leaving the mature 70S translation initiation complex. This Xanthomonas campestris pv. campestris (strain B100) protein is Translation initiation factor IF-1.